Consider the following 428-residue polypeptide: tRNA modification GTPase MnmE (428 aa).

Arg20, Glu77, and Lys117 together coordinate (6S)-5-formyl-5,6,7,8-tetrahydrofolate. A TrmE-type G domain is found at 213-351; that stretch reads GFEIALVGAP…LLEKIRSVFS (139 aa). Asn223 serves as a coordination point for K(+). GTP-binding positions include 223–228, 242–248, and 267–270; these read NAGKST, SEIAGTT, and DTAG. Ser227 provides a ligand contact to Mg(2+). Ser242, Ile244, and Thr247 together coordinate K(+). Thr248 is a binding site for Mg(2+). Residue Lys428 coordinates (6S)-5-formyl-5,6,7,8-tetrahydrofolate.

This sequence belongs to the TRAFAC class TrmE-Era-EngA-EngB-Septin-like GTPase superfamily. TrmE GTPase family. Homodimer. Heterotetramer of two MnmE and two MnmG subunits. K(+) serves as cofactor.

The protein resides in the cytoplasm. Functionally, exhibits a very high intrinsic GTPase hydrolysis rate. Involved in the addition of a carboxymethylaminomethyl (cmnm) group at the wobble position (U34) of certain tRNAs, forming tRNA-cmnm(5)s(2)U34. In Roseobacter denitrificans (strain ATCC 33942 / OCh 114) (Erythrobacter sp. (strain OCh 114)), this protein is tRNA modification GTPase MnmE.